We begin with the raw amino-acid sequence, 541 residues long: Pseudokinase FAM20A (541 aa).

An N-terminal signal peptide occupies residues 1–33 (MPGLRRDRLLTLLLLGALLSADLYFHLWPQVQR). The segment at 38–90 (RERPRGCPCTGRASSLARDSAAAASDPGTIVHNFSRTEPRTEPAGGSHSGSSS) is disordered. Residues 49–63 (RASSLARDSAAAASD) are compositionally biased toward low complexity. Asparagine 70, asparagine 145, and asparagine 287 each carry an N-linked (GlcNAc...) asparagine glycan. Disulfide bonds link cysteine 314–cysteine 330, cysteine 319–cysteine 323, cysteine 378–cysteine 452, and cysteine 453–cysteine 512. Asparagine 388 carries an N-linked (GlcNAc...) asparagine glycan. Asparagine 538 is a glycosylation site (N-linked (GlcNAc...) asparagine).

This sequence belongs to the FAM20 family. In terms of assembly, interacts with FAM20C; probably forming a heterotetramer of 2 subunits of FAM20A and 2 subunits of FAM20C. N-glycosylated. In terms of tissue distribution, highly expressed in lung and liver. Intermediate levels in thymus and ovary.

It localises to the secreted. Its subcellular location is the golgi apparatus. The protein localises to the endoplasmic reticulum. Its function is as follows. Pseudokinase that acts as an allosteric activator of the Golgi serine/threonine protein kinase FAM20C and is involved in biomineralization of teeth. Forms a complex with FAM20C and increases the ability of FAM20C to phosphorylate the proteins that form the 'matrix' that guides the deposition of the enamel minerals. This chain is Pseudokinase FAM20A, found in Homo sapiens (Human).